The primary structure comprises 791 residues: uncharacterized protein (791 aa).

The chain crosses the membrane as a helical span at residues 10-30 (LLTITIGAVAVSSILLGGIFY). The segment covering 56–76 (NLDYQKARPSIKDNNLKEIPK) has biased composition (basic and acidic residues). Positions 56 to 175 (NLDYQKARPS…PQPQQIPNQS (120 aa)) are disordered. The segment covering 77-97 (PKPQPKPEPQPTPFPDPIPTP) has biased composition (pro residues). The span at 98-124 (PKKEELKKPEIKPEEPKKPEIKPEPIP) shows a compositional bias: basic and acidic residues. Pro residues predominate over residues 125–139 (KPKPQPIPQPTPPVE).

To U.parvum UU044.

Its subcellular location is the membrane. This is an uncharacterized protein from Ureaplasma parvum serovar 3 (strain ATCC 700970).